We begin with the raw amino-acid sequence, 48 residues long: DNA gyrase inhibitor YacG (48 aa).

Residues Cys9, Cys12, Cys28, and Cys32 each coordinate Zn(2+).

This sequence belongs to the DNA gyrase inhibitor YacG family. In terms of assembly, interacts with GyrB. Zn(2+) serves as cofactor.

In terms of biological role, inhibits all the catalytic activities of DNA gyrase by preventing its interaction with DNA. Acts by binding directly to the C-terminal domain of GyrB, which probably disrupts DNA binding by the gyrase. The protein is DNA gyrase inhibitor YacG of Wigglesworthia glossinidia brevipalpis.